The primary structure comprises 196 residues: uncharacterized protein (196 aa).

It to E.coli YjaG.

This is an uncharacterized protein from Haemophilus influenzae (strain ATCC 51907 / DSM 11121 / KW20 / Rd).